Consider the following 919-residue polypeptide: Beta-galactosidase 15 (919 aa).

An N-terminal signal peptide occupies residues 1-31; the sequence is MAASRGPPLLGFRALALALLLAILLLLGCSA. N63 is a glycosylation site (N-linked (GlcNAc...) asparagine). The active-site Proton donor is the E220. Catalysis depends on E289, which acts as the Nucleophile. Residues N412, N530, N546, and N855 are each glycosylated (N-linked (GlcNAc...) asparagine). The SUEL-type lectin domain maps to 822-907; the sequence is NAATPELRLQ…KDLAVEAKCS (86 aa).

The protein belongs to the glycosyl hydrolase 35 family.

It localises to the secreted. It is found in the extracellular space. Its subcellular location is the apoplast. The enzyme catalyses Hydrolysis of terminal non-reducing beta-D-galactose residues in beta-D-galactosides.. The protein is Beta-galactosidase 15 of Oryza sativa subsp. japonica (Rice).